Here is a 380-residue protein sequence, read N- to C-terminus: Ceramide synthase 2 (380 aa).

Residues 1 to 40 (MLQTLYDYFWWERLWLPVNLTWADLEDRDGRVYAKASDLY) are Lumenal-facing. N-linked (GlcNAc...) asparagine glycosylation is present at N19. The chain crosses the membrane as a helical span at residues 41-61 (ITLPLALLFLIVRYFFELYVA). Residues 67-128 (LLNIKEKTRL…RRRRNQDRPS (62 aa)) are homeobox-like. The TLC domain occupies 131-332 (KKFREASWRF…ILRMAHKFIT (202 aa)). 4 consecutive transmembrane segments (helical) span residues 140–160 (FTFY…KPWF), 181–201 (WYYM…ASDV), 209–229 (QIIH…ANYI), and 264–284 (IFIV…PFWI). Residues 291–300 (YPLELYPAFF) carry the Last loop motif motif. A helical membrane pass occupies residues 304 to 324 (FFNSMMGVLQLLHIFWAYLIL). Residues 325–380 (RMAHKFITGKLVEDERSDREETESSEGEEAAAGGGAKSRPLANGHPILNNNHRKND) are Cytoplasmic-facing. The disordered stretch occupies residues 338–380 (DERSDREETESSEGEEAAAGGGAKSRPLANGHPILNNNHRKND). Position 341 is a phosphoserine (S341). Acidic residues predominate over residues 344–353 (EETESSEGEE). T346 carries the phosphothreonine modification. A phosphoserine mark is found at S348 and S349.

In terms of assembly, interacts with ATP6V0C, ASGR1, ASGR2 and SLC22A1/OCT1. Interacts with ELOV1, HSD17B12 and TECR. Interacts with NDUFS2. Interacts with PAQR4; the interaction regulates the stability and activity of CERS2 and is inhibited in presence of ceramides. Acetylated. Deacetylation by SIRT3 increases enzyme activity and promotes mitochondrial ceramide accumulation. Post-translationally, phosphorylated at the C-terminus by CK2, leading to increase the ceramide synthase activity. In terms of tissue distribution, expressed in kidney, liver, brain, heart, placenta and lung.

The protein localises to the endoplasmic reticulum membrane. It catalyses the reaction a very long-chain fatty acyl-CoA + a sphingoid base = an N-(very-long-chain fatty acyl)-sphingoid base + CoA + H(+). The catalysed reaction is docosanoyl-CoA + sphinganine = N-docosanoylsphinganine + CoA + H(+). It carries out the reaction tetracosanoyl-CoA + sphinganine = N-tetracosanoylsphinganine + CoA + H(+). The enzyme catalyses hexacosanoyl-CoA + sphinganine = N-hexacosanoylsphinganine + CoA + H(+). It catalyses the reaction (15Z)-tetracosenoyl-CoA + sphinganine = N-(15Z-tetracosenoyl)-sphinganine + CoA + H(+). The catalysed reaction is 2-hydroxytetracosanoyl-CoA + sphinganine = N-(2-hydroxytetracosanoyl)-sphinganine + CoA + H(+). It carries out the reaction 2-hydroxydocosanoyl-CoA + sphinganine = N-(2-hydroxydocosanoyl)-sphinganine + CoA + H(+). The enzyme catalyses 2-hydroxytetracosenoyl-CoA + sphinganine = N-(2-hydroxytetracosenoyl)-sphinganine + CoA + H(+). It catalyses the reaction tetracosenoyl-CoA + sphinganine = an N-tetracosenoylsphinganine + CoA + H(+). The catalysed reaction is hexacosenoyl-CoA + sphinganine = N-hexacosenoylsphinganine + CoA + H(+). It carries out the reaction tetracosanoyl-CoA + sphing-4-enine = N-tetracosanoyl-sphing-4-enine + CoA + H(+). The enzyme catalyses tetracosenoyl-CoA + sphing-4-enine = N-(tetracosenoyl)-sphing-4-enine + CoA + H(+). It catalyses the reaction heptadecasphing-4-enine + tetracosanoyl-CoA = N-tetracosanoyl-heptadecasphing-4-enine + CoA + H(+). The catalysed reaction is a fatty acyl-CoA + sphing-4-enine = an N-acylsphing-4-enine + CoA + H(+). It carries out the reaction sphing-4-enine + hexadecanoyl-CoA = N-hexadecanoylsphing-4-enine + CoA + H(+). The enzyme catalyses sphing-4-enine + octadecanoyl-CoA = N-octadecanoylsphing-4-enine + CoA + H(+). It catalyses the reaction eicosanoyl-CoA + sphing-4-enine = N-eicosanoyl-sphing-4-enine + CoA + H(+). The catalysed reaction is sphinganine + hexadecanoyl-CoA = N-hexadecanoylsphinganine + CoA + H(+). It carries out the reaction sphinganine + octadecanoyl-CoA = N-(octadecanoyl)-sphinganine + CoA + H(+). The enzyme catalyses sphinganine + (9Z)-octadecenoyl-CoA = N-(9Z-octadecenoyl)-sphinganine + CoA + H(+). It catalyses the reaction eicosanoyl-CoA + sphinganine = N-eicosanoylsphinganine + CoA + H(+). The protein operates within lipid metabolism; sphingolipid metabolism. Ceramide synthase activity is inhibited by sphingosine-1-phosphate. Functionally, ceramide synthase that catalyzes the transfer of the acyl chain from acyl-CoA to a sphingoid base, with high selectivity toward very-long-chain fatty acyl-CoA (chain length C22-C27). N-acylates sphinganine and sphingosine bases to form dihydroceramides and ceramides in de novo synthesis and salvage pathways, respectively. Plays a non-redundant role in the synthesis of ceramides with very-long-chain fatty acids in kidney, liver and brain. Regulates the abundance of myelin-specific sphingolipids galactosylceramide and sulfatide that affects myelin sheath architecture and motor neuron functions. This is Ceramide synthase 2 from Homo sapiens (Human).